Reading from the N-terminus, the 96-residue chain is Aspartyl/glutamyl-tRNA(Asn/Gln) amidotransferase subunit C (96 aa).

This sequence belongs to the GatC family. Heterotrimer of A, B and C subunits.

It carries out the reaction L-glutamyl-tRNA(Gln) + L-glutamine + ATP + H2O = L-glutaminyl-tRNA(Gln) + L-glutamate + ADP + phosphate + H(+). The catalysed reaction is L-aspartyl-tRNA(Asn) + L-glutamine + ATP + H2O = L-asparaginyl-tRNA(Asn) + L-glutamate + ADP + phosphate + 2 H(+). Allows the formation of correctly charged Asn-tRNA(Asn) or Gln-tRNA(Gln) through the transamidation of misacylated Asp-tRNA(Asn) or Glu-tRNA(Gln) in organisms which lack either or both of asparaginyl-tRNA or glutaminyl-tRNA synthetases. The reaction takes place in the presence of glutamine and ATP through an activated phospho-Asp-tRNA(Asn) or phospho-Glu-tRNA(Gln). This Bacillus cytotoxicus (strain DSM 22905 / CIP 110041 / 391-98 / NVH 391-98) protein is Aspartyl/glutamyl-tRNA(Asn/Gln) amidotransferase subunit C.